The chain runs to 324 residues: Glyoxylate/hydroxypyruvate reductase B (324 aa).

Residues Arg-237 and Glu-266 contribute to the active site. The Proton donor role is filled by His-285.

The protein belongs to the D-isomer specific 2-hydroxyacid dehydrogenase family. GhrB subfamily. As to quaternary structure, homodimer.

Its subcellular location is the cytoplasm. The catalysed reaction is glycolate + NADP(+) = glyoxylate + NADPH + H(+). It catalyses the reaction (R)-glycerate + NAD(+) = 3-hydroxypyruvate + NADH + H(+). The enzyme catalyses (R)-glycerate + NADP(+) = 3-hydroxypyruvate + NADPH + H(+). In terms of biological role, catalyzes the NADPH-dependent reduction of glyoxylate and hydroxypyruvate into glycolate and glycerate, respectively. In Shigella sonnei (strain Ss046), this protein is Glyoxylate/hydroxypyruvate reductase B.